Here is an 821-residue protein sequence, read N- to C-terminus: Cation/H(+) antiporter 15 (821 aa).

A run of 13 helical transmembrane segments spans residues 37–57, 65–82, 97–117, 131–151, 166–186, 200–220, 228–248, 268–288, 292–312, 318–338, 350–370, 378–398, and 410–430; these read LPLFVLQLTLVVVVTRFFVFI, RVISEILGGIVLGPSVLG, VMVLETMANVGLLYFLFLVGV, ALTIAIGGMVLPFLIGAAFSF, ILFLGVALSVTAFPVLARILA, MSAALVNDMFAWILLALAIAL, FASLWVMISSAVFIAVCVFVV, FHICLILTGVMISGFITDAIG, VFGAFVFGLVIPNGPLGLTLI, FVSGLLLPLFFAISGLKTNIA, FLVIFLACAGKVIGTVIVAFF, GITLGLLLNTKGLVEMIVLNV, and FATMVLVALVMTGVITPIVTI. The interval 800-821 is disordered; that stretch reads DFPESPVHSHETKVTYGLENPR.

The protein belongs to the monovalent cation:proton antiporter 2 (CPA2) transporter (TC 2.A.37) family. CHX (TC 2.A.37.4) subfamily. In terms of tissue distribution, specifically expressed in pollen.

The protein resides in the membrane. May operate as a cation/H(+) antiporter. This Arabidopsis thaliana (Mouse-ear cress) protein is Cation/H(+) antiporter 15 (CHX15).